The following is a 327-amino-acid chain: Cyclic AMP-responsive element-binding protein 1 (327 aa).

Disordered regions lie at residues 1-29 (MTMDSGADNQQSGDAAVTEAESQQMTVQA) and 94-113 (SEDSQESVDSVTDSQKRREI). The KID domain maps to 8-146 (DNQQSGDAAV…IEEEKSEEET (139 aa)). Residues 20–29 (AESQQMTVQA) are compositionally biased toward polar residues. The residue at position 119 (S119) is a Phosphoserine; by CaMK1, CaMK2, CaMK4, PKB/AKT1 or PKB/AKT2, RPS6KA3, RPS6KA4, RPS6KA5 and SGK1. A Glycyl lysine isopeptide (Lys-Gly) (interchain with G-Cter in SUMO2) cross-link involves residue K122. Residues 126–149 (DLSSDAPGVPRIEEEKSEEETSAP) form a disordered region. Residue S128 is modified to Phosphoserine; by CaMK2. At S257 the chain carries Phosphoserine; by HIPK2. The bZIP domain occupies 269 to 327 (ARKREVRLMKNREAARECRRKKKEYVKCLENRVAVLENQNKTLIEELKALKDLYCHKSD). A basic motif region spans residues 270 to 295 (RKREVRLMKNREAARECRRKKKEYVK). Residues K271 and K290 each participate in a glycyl lysine isopeptide (Lys-Gly) (interchain with G-Cter in SUMO1) cross-link. Residues 297–318 (LENRVAVLENQNKTLIEELKAL) are leucine-zipper.

The protein belongs to the bZIP family. As to quaternary structure, interacts with PPRC1. Binds DNA as a dimer. This dimer is stabilized by magnesium ions. Interacts, through the bZIP domain, with the coactivators CRTC1/TORC1, CRTC2/TORC2 and CRTC3/TORC3. When phosphorylated on Ser-119, binds CREBBP. Interacts with CREBL2; regulates CREB1 phosphorylation, stability and transcriptional activity. Interacts (phosphorylated form) with TOX3. Interacts with ARRB1. Binds to HIPK2. Interacts with SGK1. Interacts with TSSK4; this interaction facilitates phosphorylation on Ser-119. Forms a complex with KMT2A and CREBBP. Interacts with TOX4; CREB1 is required for full induction of TOX4-dependent activity and the interaction is increased by cAMP and inhibited by insulin. Phosphorylation of Ser-119 allows CREBBP binding. Stimulated by phosphorylation. Phosphorylation of both Ser-128 and Ser-119 in the SCN regulates the activity of CREB and participate in circadian rhythm generation. Phosphorylated upon calcium influx by CaMK4 and CaMK2 on Ser-119. CaMK4 is much more potent than CaMK2 in activating CREB. Phosphorylated by CaMK2 on Ser-128. Phosphorylation of Ser-128 blocks CREB-mediated transcription even when Ser-119 is phosphorylated. Phosphorylated by CaMK1. Phosphorylation of Ser-257 by HIPK2 in response to genotoxic stress promotes CREB1 activity, facilitating the recruitment of the coactivator CBP. Phosphorylated at Ser-119 by RPS6KA3, RPS6KA4 and RPS6KA5 in response to mitogenic or stress stimuli. CREBL2 positively regulates phosphorylation at Ser-119 thereby stimulating CREB1 transcriptional activity. In liver, phosphorylation is induced by fasting or glucagon in a circadian fashion. Phosphorylated by TSSK4 on Ser-119. Post-translationally, sumoylated with SUMO1. Sumoylation on Lys-290, but not on Lys-271, is required for nuclear localization of this protein. Sumoylation is enhanced under hypoxia, promoting nuclear localization and stabilization.

It localises to the nucleus. Its function is as follows. Phosphorylation-dependent transcription factor that stimulates transcription upon binding to the DNA cAMP response element (CRE), a sequence present in many viral and cellular promoters. Transcription activation is enhanced by the TORC coactivators which act independently of Ser-119 phosphorylation. Involved in different cellular processes including the synchronization of circadian rhythmicity and the differentiation of adipose cells. Regulates the expression of apoptotic and inflammatory response factors in cardiomyocytes in response to ERFE-mediated activation of AKT signaling. The polypeptide is Cyclic AMP-responsive element-binding protein 1 (Creb1) (Rattus norvegicus (Rat)).